The primary structure comprises 239 residues: Leucine-rich repeat-containing protein 57 (239 aa).

The N-myristoyl glycine moiety is linked to residue Gly2. 8 LRR repeats span residues Asn39–Lys60, Leu63–Leu84, Lys86–Leu107, Ala109–Arg131, His132–Leu153, Gln154–Cys175, Arg177–Ile197, and Gln202–Glu222.

It is found in the membrane. This chain is Leucine-rich repeat-containing protein 57 (LRRC57), found in Homo sapiens (Human).